The sequence spans 330 residues: Fructose-1,6-bisphosphatase class 1 (330 aa).

Mg(2+) is bound by residues glutamate 84, aspartate 103, leucine 105, and aspartate 106. Residues 106-109 (DGSS), asparagine 196, and lysine 262 contribute to the substrate site. Glutamate 268 contacts Mg(2+).

It belongs to the FBPase class 1 family. Homotetramer. It depends on Mg(2+) as a cofactor.

Its subcellular location is the cytoplasm. The enzyme catalyses beta-D-fructose 1,6-bisphosphate + H2O = beta-D-fructose 6-phosphate + phosphate. It functions in the pathway carbohydrate biosynthesis; gluconeogenesis. The chain is Fructose-1,6-bisphosphatase class 1 from Shewanella sp. (strain W3-18-1).